The chain runs to 161 residues: Cyclic pyranopterin monophosphate synthase (161 aa).

Substrate-binding positions include 75–77 and 115–116; these read MCH and ME. Residue Asp130 is part of the active site.

Belongs to the MoaC family. In terms of assembly, homohexamer; trimer of dimers.

It carries out the reaction (8S)-3',8-cyclo-7,8-dihydroguanosine 5'-triphosphate = cyclic pyranopterin phosphate + diphosphate. It functions in the pathway cofactor biosynthesis; molybdopterin biosynthesis. Functionally, catalyzes the conversion of (8S)-3',8-cyclo-7,8-dihydroguanosine 5'-triphosphate to cyclic pyranopterin monophosphate (cPMP). In Bacillus cereus (strain ATCC 10987 / NRS 248), this protein is Cyclic pyranopterin monophosphate synthase.